We begin with the raw amino-acid sequence, 250 residues long: Complement factor B-like protease (250 aa).

3 consecutive Sushi domains span residues 3-73 (TRCD…KCRA), 74-133 (VWCP…VCDD), and 136-193 (GDCP…QCRA). Intrachain disulfides connect Cys5–Cys44, Cys30–Cys71, Cys76–Cys118, Cys104–Cys131, Cys138–Cys178, and Cys164–Cys191. Residue Asn115 is glycosylated (N-linked (GlcNAc...) asparagine). The N-linked (GlcNAc...) asparagine glycan is linked to Asn221.

The protein belongs to the peptidase S1 family. In terms of tissue distribution, plasma.

Its subcellular location is the secreted. Required in both the classical and alternate pathways of the complement system. This is Complement factor B-like protease from Gallus gallus (Chicken).